A 255-amino-acid chain; its full sequence is GTP cyclohydrolase III 1 (255 aa).

Belongs to the archaeal-type GTP cyclohydrolase family.

It carries out the reaction GTP + 3 H2O = 2-amino-5-formylamino-6-(5-phospho-D-ribosylamino)pyrimidin-4(3H)-one + 2 phosphate + 2 H(+). Catalyzes the formation of 2-amino-5-formylamino-6-ribofuranosylamino-4(3H)-pyrimidinone ribonucleotide monophosphate and inorganic phosphate from GTP. Also has an independent pyrophosphate phosphohydrolase activity. The protein is GTP cyclohydrolase III 1 (gch31) of Halobacterium salinarum (strain ATCC 700922 / JCM 11081 / NRC-1) (Halobacterium halobium).